The following is a 336-amino-acid chain: Ketoreductase adrE (336 aa).

Y171 serves as a coordination point for NADP(+).

It belongs to the NAD(P)-dependent epimerase/dehydratase family. Dihydroflavonol-4-reductase subfamily.

Its pathway is secondary metabolite biosynthesis; terpenoid biosynthesis. Functionally, ketoreductase; part of the gene cluster that mediates the biosynthesis of andrastins, meroterpenoid compounds that exhibit inhibitory activity against ras farnesyltransferase, suggesting that they could be promising leads for antitumor agents. The first step of the pathway is the synthesis of 3,5-dimethylorsellinic acid (DMOA) by the polyketide synthase adrD via condensation of one acetyl-CoA starter unit with 3 malonyl-CoA units and 2 methylations. DMAO is then converted to farnesyl-DMAO by the prenyltransferase adrG. The methyltransferase adrK catalyzes the methylation of the carboxyl group of farnesyl-DMAO to farnesyl-DMAO methyl ester which is further converted to epoxyfarnesyl-DMAO methyl ester by the FAD-dependent monooxygenase adrH. The terpene cyclase adrI then catalyzes the carbon skeletal rearrangement to generate the andrastin E, the first compound in the pathway having the andrastin scaffold, with the tetracyclic ring system. The post-cyclization tailoring enzymes adrF, adrE, adrJ, and adrA, are involved in the conversion of andrastin E into andrastin A. The short chain dehydrogenase adrF is responsible for the oxidation of the C-3 a hydroxyl group of andrastin E to yield the corresponding ketone, andrastin D. The ketoreductase adrE stereoselectively reduces the carbonyl moiety to reverse the stereochemistry of the C-3 position to yield andrastin F. The acetyltransferase adrJ is the acetyltransferase that attaches the acetyl group to the C-3 hydroxyl group of andrastin F to yield andrastin C. Finally, the cytochrome P450 monooxygenase adrA catalyzes two sequential oxidation reactions of the C-23 methyl group, to generate the corresponding alcohol andrastin B, and aldehyde andrastin A. In Penicillium roqueforti, this protein is Ketoreductase adrE.